The chain runs to 92 residues: Protein S100-A12 (92 aa).

EF-hand domains are found at residues 13–48 and 49–84; these read NIFHQYSVRLGHYDTLIKRELKQLITKELPNTLKNT and KDQGTIDKIFQNLDANQDEQVSFKEFVVLVTDVLIT. Residue histidine 16 coordinates Cu cation. Histidine 16 contacts Zn(2+). Positions 19 and 24 each coordinate Ca(2+). Residue aspartate 26 coordinates Cu cation. Zn(2+) is bound at residue aspartate 26. Ca(2+) is bound by residues threonine 27 and glutamate 32. The hinge domain stretch occupies residues 38-53; that stretch reads TKELPNTLKNTKDQGT. Positions 62, 64, 66, 68, and 73 each coordinate Ca(2+). Histidine 86 and histidine 90 together coordinate Cu cation. The Zn(2+) site is built by histidine 86 and histidine 90.

It belongs to the S-100 family. In terms of assembly, homodimer. Homooligomer (tetramer or hexamer) in the presence of calcium, zinc and copper ions. Interacts with AGER and both calcium and zinc are essential for the interaction. Interacts with CACYBP in a calcium-dependent manner. Found essentially in granulocytes with small amounts found in lymphocytes.

The protein localises to the secreted. The protein resides in the cytoplasm. It localises to the cytoskeleton. Its subcellular location is the cell membrane. Functionally, S100A12 is a calcium-, zinc- and copper-binding protein which plays a prominent role in the regulation of inflammatory processes and immune response. Its pro-inflammatory activity involves recruitment of leukocytes, promotion of cytokine and chemokine production, and regulation of leukocyte adhesion and migration. Acts as an alarmin or a danger associated molecular pattern (DAMP) molecule and stimulates innate immune cells via binding to receptor for advanced glycation endproducts (AGER). Binding to AGER activates the MAP-kinase and NF-kappa-B signaling pathways leading to production of pro-inflammatory cytokines and up-regulation of cell adhesion molecules ICAM1 and VCAM1. Acts as a monocyte and mast cell chemoattractant. Can stimulate mast cell degranulation and activation which generates chemokines, histamine and cytokines inducing further leukocyte recruitment to the sites of inflammation. Can inhibit the activity of matrix metalloproteinases; MMP2, MMP3 and MMP9 by chelating Zn(2+) from their active sites. The sequence is that of Protein S100-A12 (S100A12) from Sus scrofa (Pig).